A 234-amino-acid polypeptide reads, in one-letter code: Lipoprotein-releasing system ATP-binding protein LolD (234 aa).

The ABC transporter domain occupies 7 to 234 (LLCNNLCKKY…QDELTVTGAL (228 aa)). Residue 43-50 (GSSGSGKS) coordinates ATP.

The protein belongs to the ABC transporter superfamily. Lipoprotein translocase (TC 3.A.1.125) family. In terms of assembly, the complex is composed of two ATP-binding proteins (LolD) and two transmembrane proteins (LolC and LolE).

Its subcellular location is the cell inner membrane. Its function is as follows. Part of the ABC transporter complex LolCDE involved in the translocation of mature outer membrane-directed lipoproteins, from the inner membrane to the periplasmic chaperone, LolA. Responsible for the formation of the LolA-lipoprotein complex in an ATP-dependent manner. The protein is Lipoprotein-releasing system ATP-binding protein LolD of Photorhabdus laumondii subsp. laumondii (strain DSM 15139 / CIP 105565 / TT01) (Photorhabdus luminescens subsp. laumondii).